The following is a 905-amino-acid chain: Stonin-2 (905 aa).

3 disordered regions span residues Met1–Thr121, Glu178–Glu205, and Leu244–Pro263. Positions Ser40 to Ser50 are enriched in low complexity. Residues Ser60 to Glu73 are compositionally biased toward basic and acidic residues. Over residues Pro85–Asp94 the composition is skewed to pro residues. Over residues Glu178 to Leu196 the composition is skewed to polar residues. Over residues Leu244–Pro256 the composition is skewed to pro residues. A Phosphothreonine modification is found at Thr255. 3 positions are modified to phosphoserine: Ser281, Ser287, and Ser302. Short sequence motifs (NPF) lie at residues Asn313–Phe315 and Asn329–Phe331. The SHD domain maps to Gly427–Ser560. An MHD domain is found at Glu568 to Trp878. Ser762 is subject to Phosphoserine.

It belongs to the Stoned B family. Interacts with the second C2 domain of synaptotagmins SYT1 and SYT2. Interacts with EPS15, EPS15R and ITSN1. Interacts indirectly with the AP-2 adapter complex. Interacts with TOR1A and COPS4; the interaction controls STON2 protein stability. In terms of processing, phosphorylated in vitro by PKD. Post-translationally, neddylated; deneddylated via its interaction with the COP9 signalosome (CSN) complex through TOR1A and COPS4. Ubiquitinated; leading to its degradation. In terms of tissue distribution, ubiquitous.

The protein localises to the cytoplasm. It is found in the membrane. Its subcellular location is the synapse. It localises to the synaptosome. Functionally, adapter protein involved in endocytic machinery. Involved in the synaptic vesicle recycling. May facilitate clathrin-coated vesicle uncoating. This is Stonin-2 (STON2) from Homo sapiens (Human).